A 229-amino-acid chain; its full sequence is DNA mismatch repair protein MutH (229 aa).

It belongs to the MutH family.

Its subcellular location is the cytoplasm. Sequence-specific endonuclease that cleaves unmethylated GATC sequences. It is involved in DNA mismatch repair. This Escherichia coli O127:H6 (strain E2348/69 / EPEC) protein is DNA mismatch repair protein MutH.